A 1097-amino-acid chain; its full sequence is Translation initiation factor IF-2 (1097 aa).

Residues 79 to 458 (LEKRVSPQAD…RVIKKKPKKA (380 aa)) are disordered. A compositionally biased stretch (basic and acidic residues) spans 97–112 (AKKEASQEKADAHAKL). The segment covering 157–173 (AATLAVEEAPIAAAPTE) has biased composition (low complexity). 2 stretches are compositionally biased toward basic and acidic residues: residues 174-190 (EPMH…KIDS) and 202-221 (VEVH…HAEE). A compositionally biased stretch (low complexity) spans 224–236 (TPTTEASSEETSA). A compositionally biased stretch (polar residues) spans 258-267 (RKTQNTTNVS). The segment covering 268–286 (EENKQHEKQPETLKSDKAM) has biased composition (basic and acidic residues). Residues 340-363 (SDSLQAEISRQQNEISNRFSQSEN) show a composition bias toward polar residues. Over residues 376 to 385 (HKKKRKRKKN) the composition is skewed to basic residues. Residues 402–443 (PKQEEKPVKKEKPKEREKPAAGKKEQTPGKKPVREDQKERVL) are compositionally biased toward basic and acidic residues. The tr-type G domain maps to 591-761 (TRPPVVTIMG…LVEAELLELK (171 aa)). A G1 region spans residues 600–607 (GHVDHGKT). Position 600–607 (600–607 (GHVDHGKT)) interacts with GTP. The segment at 625-629 (GITQH) is G2. Residues 647-650 (DTPG) are G3. GTP contacts are provided by residues 647 to 651 (DTPGH) and 701 to 704 (NKID). Residues 701 to 704 (NKID) form a G4 region. The tract at residues 737–739 (SAK) is G5.

This sequence belongs to the TRAFAC class translation factor GTPase superfamily. Classic translation factor GTPase family. IF-2 subfamily.

The protein localises to the cytoplasm. Functionally, one of the essential components for the initiation of protein synthesis. Protects formylmethionyl-tRNA from spontaneous hydrolysis and promotes its binding to the 30S ribosomal subunits. Also involved in the hydrolysis of GTP during the formation of the 70S ribosomal complex. The chain is Translation initiation factor IF-2 from Chloroherpeton thalassium (strain ATCC 35110 / GB-78).